The primary structure comprises 293 residues: Lipoyl synthase (293 aa).

[4Fe-4S] cluster-binding residues include cysteine 47, cysteine 52, cysteine 58, cysteine 73, cysteine 77, cysteine 80, and serine 285. Positions 59–274 (WSEGTATFMI…EKIGLELGFR (216 aa)) constitute a Radical SAM core domain.

Belongs to the radical SAM superfamily. Lipoyl synthase family. The cofactor is [4Fe-4S] cluster.

It is found in the cytoplasm. It carries out the reaction [[Fe-S] cluster scaffold protein carrying a second [4Fe-4S](2+) cluster] + N(6)-octanoyl-L-lysyl-[protein] + 2 oxidized [2Fe-2S]-[ferredoxin] + 2 S-adenosyl-L-methionine + 4 H(+) = [[Fe-S] cluster scaffold protein] + N(6)-[(R)-dihydrolipoyl]-L-lysyl-[protein] + 4 Fe(3+) + 2 hydrogen sulfide + 2 5'-deoxyadenosine + 2 L-methionine + 2 reduced [2Fe-2S]-[ferredoxin]. The protein operates within protein modification; protein lipoylation via endogenous pathway; protein N(6)-(lipoyl)lysine from octanoyl-[acyl-carrier-protein]: step 2/2. Functionally, catalyzes the radical-mediated insertion of two sulfur atoms into the C-6 and C-8 positions of the octanoyl moiety bound to the lipoyl domains of lipoate-dependent enzymes, thereby converting the octanoylated domains into lipoylated derivatives. The polypeptide is Lipoyl synthase (Christiangramia forsetii (strain DSM 17595 / CGMCC 1.15422 / KT0803) (Gramella forsetii)).